The sequence spans 472 residues: Clampless protein 1 (472 aa).

Asn-70 and Asn-296 each carry an N-linked (GlcNAc...) asparagine glycan.

In terms of biological role, required for developmental progression after cells of opposite mating types fuse with one another, essential for processes common to both dikaryotic filament formation and monokaryotic fruiting. A direct target for transcription factors Sxi1-alpha and Sxi2-a. This chain is Clampless protein 1, found in Cryptococcus neoformans var. neoformans serotype D (strain B-3501A) (Filobasidiella neoformans).